The chain runs to 183 residues: dCTP deaminase (183 aa).

DCTP-binding positions include 106 to 111 (KSTYAR), 130 to 132 (TLE), Q151, Y165, and Q175. E132 functions as the Proton donor/acceptor in the catalytic mechanism.

This sequence belongs to the dCTP deaminase family. As to quaternary structure, homotrimer.

The enzyme catalyses dCTP + H2O + H(+) = dUTP + NH4(+). It functions in the pathway pyrimidine metabolism; dUMP biosynthesis; dUMP from dCTP (dUTP route): step 1/2. Catalyzes the deamination of dCTP to dUTP. In Acidobacterium capsulatum (strain ATCC 51196 / DSM 11244 / BCRC 80197 / JCM 7670 / NBRC 15755 / NCIMB 13165 / 161), this protein is dCTP deaminase.